A 371-amino-acid chain; its full sequence is Geranylgeranyl pyrophosphate synthase paxG (371 aa).

Positions 89, 92, and 121 each coordinate isopentenyl diphosphate. Residues Asp-128 and Asp-132 each coordinate Mg(2+). Residue Arg-137 coordinates dimethylallyl diphosphate. Arg-138 provides a ligand contact to isopentenyl diphosphate. 3 residues coordinate dimethylallyl diphosphate: Lys-215, Thr-216, and Gln-249. Asp-252 is a Mg(2+) binding site. Dimethylallyl diphosphate-binding residues include Asn-256, Lys-266, and Lys-276. The Peroxisomal targeting signal motif lies at 369-371; sequence GRV.

Belongs to the FPP/GGPP synthase family. It depends on Mg(2+) as a cofactor.

It is found in the peroxisome. The enzyme catalyses isopentenyl diphosphate + dimethylallyl diphosphate = (2E)-geranyl diphosphate + diphosphate. It carries out the reaction isopentenyl diphosphate + (2E)-geranyl diphosphate = (2E,6E)-farnesyl diphosphate + diphosphate. The catalysed reaction is isopentenyl diphosphate + (2E,6E)-farnesyl diphosphate = (2E,6E,10E)-geranylgeranyl diphosphate + diphosphate. The protein operates within secondary metabolite biosynthesis. In terms of biological role, geranylgeranyl pyrophosphate synthase; part of the gene cluster that mediates the biosynthesis of paxilline, a mycotoxin that acts as an inhibitor of mammalian maxi-K channels. PaxG, the geranylgeranyl diphosphate (GGPP) synthase is proposed to catalyze the first step in paxilline biosynthesis. Condensation of indole-3-glycerol phosphate with GGPP by paxC then forms 3-geranylgeranylindole (3-GGI), followed by epoxidation and cyclization of this intermediate (by paxM and paxB) to form paspaline. Paspaline is subsequently converted to 13-desoxypaxilline by paxP, the latter being then converted to paxilline by paxQ. Finally paxilline can be mono- and di-prenylated by paxD. This Penicillium paxilli protein is Geranylgeranyl pyrophosphate synthase paxG.